Consider the following 485-residue polypeptide: ATP synthase subunit beta (485 aa).

170–177 (GGAGVGKT) serves as a coordination point for ATP.

This sequence belongs to the ATPase alpha/beta chains family. In terms of assembly, F-type ATPases have 2 components, CF(1) - the catalytic core - and CF(0) - the membrane proton channel. CF(1) has five subunits: alpha(3), beta(3), gamma(1), delta(1), epsilon(1). CF(0) has three main subunits: a(1), b(2) and c(9-12). The alpha and beta chains form an alternating ring which encloses part of the gamma chain. CF(1) is attached to CF(0) by a central stalk formed by the gamma and epsilon chains, while a peripheral stalk is formed by the delta and b chains.

The protein localises to the cell membrane. The enzyme catalyses ATP + H2O + 4 H(+)(in) = ADP + phosphate + 5 H(+)(out). Produces ATP from ADP in the presence of a proton gradient across the membrane. The catalytic sites are hosted primarily by the beta subunits. This Salinispora arenicola (strain CNS-205) protein is ATP synthase subunit beta.